A 1096-amino-acid polypeptide reads, in one-letter code: DNA-directed RNA polymerase subunit beta (1096 aa).

Residues 1070 to 1096 (LMQDVNPRRSTPSRPTYESLGSDYQED) are disordered.

Belongs to the RNA polymerase beta chain family. In terms of assembly, in cyanobacteria the RNAP catalytic core is composed of 2 alpha, 1 beta, 1 beta', 1 gamma and 1 omega subunit. When a sigma factor is associated with the core the holoenzyme is formed, which can initiate transcription.

The catalysed reaction is RNA(n) + a ribonucleoside 5'-triphosphate = RNA(n+1) + diphosphate. DNA-dependent RNA polymerase catalyzes the transcription of DNA into RNA using the four ribonucleoside triphosphates as substrates. The chain is DNA-directed RNA polymerase subunit beta from Prochlorococcus marinus (strain MIT 9211).